The following is a 113-amino-acid chain: Hydrogenase maturation factor HypA (113 aa).

Histidine 2 serves as a coordination point for Ni(2+). Zn(2+) is bound by residues cysteine 73, cysteine 76, cysteine 89, and cysteine 92.

Belongs to the HypA/HybF family.

Functionally, involved in the maturation of [NiFe] hydrogenases. Required for nickel insertion into the metal center of the hydrogenase. This is Hydrogenase maturation factor HypA from Acidithiobacillus ferrooxidans (strain ATCC 23270 / DSM 14882 / CIP 104768 / NCIMB 8455) (Ferrobacillus ferrooxidans (strain ATCC 23270)).